Here is a 157-residue protein sequence, read N- to C-terminus: ATP synthase subunit b (157 aa).

A helical transmembrane segment spans residues 7–29 (LVSQAIAFSIFIWFTTKFVWPYL).

The protein belongs to the ATPase B chain family. In terms of assembly, F-type ATPases have 2 components, F(1) - the catalytic core - and F(0) - the membrane proton channel. F(1) has five subunits: alpha(3), beta(3), gamma(1), delta(1), epsilon(1). F(0) has three main subunits: a(1), b(2) and c(10-14). The alpha and beta chains form an alternating ring which encloses part of the gamma chain. F(1) is attached to F(0) by a central stalk formed by the gamma and epsilon chains, while a peripheral stalk is formed by the delta and b chains.

It localises to the cell inner membrane. Its function is as follows. F(1)F(0) ATP synthase produces ATP from ADP in the presence of a proton or sodium gradient. F-type ATPases consist of two structural domains, F(1) containing the extramembraneous catalytic core and F(0) containing the membrane proton channel, linked together by a central stalk and a peripheral stalk. During catalysis, ATP synthesis in the catalytic domain of F(1) is coupled via a rotary mechanism of the central stalk subunits to proton translocation. Component of the F(0) channel, it forms part of the peripheral stalk, linking F(1) to F(0). This chain is ATP synthase subunit b, found in Nitrosomonas eutropha (strain DSM 101675 / C91 / Nm57).